Consider the following 106-residue polypeptide: Large ribosomal subunit protein eL42 (106 aa).

Belongs to the eukaryotic ribosomal protein eL42 family.

This is Large ribosomal subunit protein eL42 (RPL44) from Kluyveromyces lactis (strain ATCC 8585 / CBS 2359 / DSM 70799 / NBRC 1267 / NRRL Y-1140 / WM37) (Yeast).